A 291-amino-acid polypeptide reads, in one-letter code: 3-hydroxy-5-phosphonooxypentane-2,4-dione thiolase (291 aa).

K203 (schiff-base intermediate with substrate) is an active-site residue.

Belongs to the DeoC/FbaB aldolase family. As to quaternary structure, homodecamer.

Its subcellular location is the cytoplasm. It catalyses the reaction dihydroxyacetone phosphate + acetyl-CoA = 3-hydroxy-2,4-dioxopentyl phosphate + CoA. In terms of biological role, involved in the degradation of phospho-AI-2, thereby terminating induction of the lsr operon and closing the AI-2 signaling cycle. Catalyzes the transfer of an acetyl moiety from 3-hydroxy-5-phosphonooxypentane-2,4-dione to CoA to form glycerone phosphate and acetyl-CoA. This is 3-hydroxy-5-phosphonooxypentane-2,4-dione thiolase from Escherichia coli (strain K12 / DH10B).